A 429-amino-acid polypeptide reads, in one-letter code: ATP-dependent RNA helicase RhlB (429 aa).

The Q motif motif lies at glutamate 9–alanine 37. In terms of domain architecture, Helicase ATP-binding spans leucine 40–valine 219. Residue alanine 53–threonine 60 coordinates ATP. Residues aspartate 165–aspartate 168 carry the DEAD box motif. The Helicase C-terminal domain occupies lysine 243 to leucine 390. The disordered stretch occupies residues alanine 395 to serine 429.

It belongs to the DEAD box helicase family. RhlB subfamily. Component of the RNA degradosome, which is a multiprotein complex involved in RNA processing and mRNA degradation.

The protein resides in the cytoplasm. The catalysed reaction is ATP + H2O = ADP + phosphate + H(+). Functionally, DEAD-box RNA helicase involved in RNA degradation. Has RNA-dependent ATPase activity and unwinds double-stranded RNA. In Aeromonas salmonicida (strain A449), this protein is ATP-dependent RNA helicase RhlB.